Here is a 1010-residue protein sequence, read N- to C-terminus: SSGPPQPGPMGPMGPRGPPGPPGSSGPQGFTGPPGEPGEPGASGAMGSRGPSGPPGKNGDDGEPGKPGRPGERGAAGPQGARGFSGLDGAKGDAGPAGPKGESGAPGENGVPGVMGARGLPGERGRPGPPGPSGARGNDGNTGPGGPPGPTGPAGPPGFPGGAGVKGETGPAGGRGNEGPQGARGEPGNPGPAGPAGPAGSPGTDGGPGAKGSPGAAGLAGAPGFPGARGPAGAQGAVGAPGPKGNNGDPGASGPKGEPGAKGEPGPAGVQGLSGPSGEEGKRGARGEPGGAGPRGPPGERGAPGARGFPGADGGAGGKGAPGERGATGESGSPGAPGAPGSKGVTGSPGSPGPDGKTGPAGVAGQDGRPGPPGSAGARGQPGVMGFPGPKGPAGESGKPGERGPAGATGPVGAPGKXGDVGAPGPSGVAGPAGEKTGKPGEQGAPGEAGPPGPSGPRGDRGFPGERGAPGLGGPTGARGEPGAAGAPGGLGAPGMQGMPGERGASGLPGAKGERGDAGGKGGDGAPGKDGARGXTGALGVPGPHGAQGEKGEGGAVGVAGPTGPRGAPGERGETGPPGPAGFAGPPGADGQPGAKGETGDSGPKGDAGAPGPGGPVGAAGPQGPAGPTGPKGARGGAGPPGATGFPGPAGRVGPSGPAGAAGPPGPVGPVGKDGARGETGAAGRPGEAGAAGAPGPSGEKGLVGLPGQRGERGFSGLPGPSGEPGKQGPSGPVGERGPPGPSGPPGLSGAPGEAGREGSQGHDGAPGRDGSAGPKGDRGESGMAGPPGPPGAPGAPGAVGPSGKSGDRGETGPAGPAGPSGPAGVRGGPAGAKGDRGEAGEAGDRGHKGHRGFTGMQGLPGPAGAHGERGPAGASGPAGPRGPAGSNGAAGKDGMNGLPGPLGPPGPRGRNGEMGPAGPPGPPGPAGPPGPPGSGFDFVSQPLQEEAPDPFRGGHYRSPDGTQKSPARALLLGGSNDVELRLPLLDLAPMDVGAPDQEFGVEVGPVCFL.

The span at 1-24 shows a compositional bias: pro residues; it reads SSGPPQPGPMGPMGPRGPPGPPGS. Residues 1–969 form a disordered region; that stretch reads SSGPPQPGPM…PDGTQKSPAR (969 aa). Residues 25–48 are compositionally biased toward low complexity; the sequence is SGPQGFTGPPGEPGEPGASGAMGS. Over residues 58 to 72 the composition is skewed to basic and acidic residues; sequence NGDDGEPGKPGRPGE. Low complexity predominate over residues 73–82; sequence RGAAGPQGAR. Residues 145–159 are compositionally biased toward pro residues; it reads GGPPGPTGPAGPPGF. Composition is skewed to gly residues over residues 160–179 and 203–212; these read PGGAGVKGETGPAGGRGNEG and GTDGGPGAKG. Composition is skewed to low complexity over residues 213–268 and 300–310; these read SPGA…PGPA and ERGAPGARGFP. Residues 311 to 323 show a composition bias toward gly residues; that stretch reads GADGGAGGKGAPG. 2 stretches are compositionally biased toward low complexity: residues 324-343 and 405-448; these read ERGATGESGSPGAPGAPGSK and PAGA…APGE. Composition is skewed to gly residues over residues 468–477, 486–495, and 519–528; these read GAPGLGGPTG, GAPGGLGAPG, and GGKGGDGAPG. Composition is skewed to low complexity over residues 559–568 and 581–596; these read VAGPTGPRGA and AGFAGPPGADGQPGAK. 2 stretches are compositionally biased toward gly residues: residues 609 to 618 and 633 to 642; these read GAPGPGGPVG and GARGGAGPPG. Composition is skewed to low complexity over residues 643 to 662, 679 to 701, and 796 to 805; these read ATGFPGPAGRVGPSGPAGAA, ETGAAGRPGEAGAAGAPGPSGEK, and APGAVGPSGK. The span at 834–847 shows a compositional bias: basic and acidic residues; it reads KGDRGEAGEAGDRG. Residues 872 to 900 are compositionally biased toward low complexity; that stretch reads PAGASGPAGPRGPAGSNGAAGKDGMNGLP. The segment covering 918 to 933 has biased composition (pro residues); sequence AGPPGPPGPAGPPGPP. The region spanning 982 to 1010 is the Fibrillar collagen NC1 domain; sequence RLPLLDLAPMDVGAPDQEFGVEVGPVCFL.

The protein belongs to the fibrillar collagen family.

The protein localises to the secreted. It is found in the extracellular space. It localises to the extracellular matrix. In Epinephelus marginatus (Dusky grouper), this protein is Collagen, type I, alpha 1b.